Here is a 337-residue protein sequence, read N- to C-terminus: DNA-directed RNA polymerase subunit alpha (337 aa).

The segment at M1–T231 is alpha N-terminal domain (alpha-NTD). Positions N248 to G337 are alpha C-terminal domain (alpha-CTD).

Belongs to the RNA polymerase alpha chain family. As to quaternary structure, homodimer. The RNAP catalytic core consists of 2 alpha, 1 beta, 1 beta' and 1 omega subunit. When a sigma factor is associated with the core the holoenzyme is formed, which can initiate transcription.

The enzyme catalyses RNA(n) + a ribonucleoside 5'-triphosphate = RNA(n+1) + diphosphate. Its function is as follows. DNA-dependent RNA polymerase catalyzes the transcription of DNA into RNA using the four ribonucleoside triphosphates as substrates. The sequence is that of DNA-directed RNA polymerase subunit alpha from Campylobacter jejuni subsp. jejuni serotype O:6 (strain 81116 / NCTC 11828).